Here is a 457-residue protein sequence, read N- to C-terminus: MADS-box transcription factor 1 (457 aa).

Residues 11-71 (PSSPRRSIQR…NACHVYSSEE (61 aa)) form the MADS-box domain. Disordered regions lie at residues 195 to 278 (SGDY…SRLH) and 295 to 328 (SSGY…LGQE). Positions 199-216 (SDSPLEPSSSSSFSVPPE) are enriched in low complexity. Over residues 218–234 (LNPTLSFQHNDVPQTDN) the composition is skewed to polar residues. Basic residues predominate over residues 265–278 (KNRRNGKPRISRLH). Residues 295-317 (SSGYLDPSSTPITPLDSAINQIT) are compositionally biased toward polar residues. Position 372 is a phosphoserine (Ser372).

Post-translationally, phosphorylated. Occurs periodically during mitosis.

Its subcellular location is the nucleus. In terms of biological role, acts as a transcriptional activator with a role in the regulation of mitosis. Regulates septation and the periodic transcription of cdc15. The sequence is that of MADS-box transcription factor 1 (mbx1) from Schizosaccharomyces pombe (strain 972 / ATCC 24843) (Fission yeast).